The chain runs to 325 residues: MSEVALEELPGVGPATAEKLKEAGFNTVEAVAVASPSELATTAEIGESTAAKIINSARQAADIGGFETGDLVLERRKLVGKLTTGCVEFDEMMGGGIETQSITELYGEFGSGKTQVAHQLAVNVQMDKEHGGLDGSVIIIDTENTFRPERITQMVKGLSEKYGMELDPEEFLQNIHVARAYNSNHQILLVDSATDLANELKEMGKPVRLLIVDSLMAHFRAEYVGRGTLADRQQKLNKHMHGLLRFGDLFNACVVVTNQVMAKPDAFFGDPTRPVGGHIVGHTATFRLYLRKSKGEKRIIRLVDSPSLPEGEAVVAVTTAGLTDQ.

Position 107–114 (107–114 (GEFGSGKT)) interacts with ATP.

The protein belongs to the eukaryotic RecA-like protein family.

Involved in DNA repair and in homologous recombination. Binds and assemble on single-stranded DNA to form a nucleoprotein filament. Hydrolyzes ATP in a ssDNA-dependent manner and promotes DNA strand exchange between homologous DNA molecules. In Methanosarcina acetivorans (strain ATCC 35395 / DSM 2834 / JCM 12185 / C2A), this protein is DNA repair and recombination protein RadA.